A 430-amino-acid polypeptide reads, in one-letter code: Mucorpepsin (430 aa).

The first 22 residues, 1–22, serve as a signal peptide directing secretion; that stretch reads MLFSQITSAILLTAASLSLTTA. Positions 23–69 are cleaved as a propeptide — activation peptide; that stretch reads RPVSKQSESKDKLLALPLTSVSRKFSQTKFGQQQLAEKLAGLKPFSE. The Peptidase A1 domain occupies 89-421; that stretch reads YAIPVSIGTP…DFGNNRIGFA (333 aa). The active site involves aspartate 107. The cysteines at positions 120 and 126 are disulfide-linked. N-linked (GlcNAc...) asparagine glycosylation is found at asparagine 148 and asparagine 257. Aspartate 306 is an active-site residue. Cysteines 341 and 385 form a disulfide.

It belongs to the peptidase A1 family.

The enzyme catalyses Hydrolysis of proteins, favoring hydrophobic residues at P1 and P1'. Clots milk. Does not accept Lys at P1, and hence does not activate trypsinogen.. In terms of biological role, this enzyme, capable of clotting milk is frequently used for cheese production. In Rhizomucor miehei, this protein is Mucorpepsin.